Consider the following 170-residue polypeptide: Adenine phosphoribosyltransferase (170 aa).

The protein belongs to the purine/pyrimidine phosphoribosyltransferase family. Homodimer.

The protein localises to the cytoplasm. It catalyses the reaction AMP + diphosphate = 5-phospho-alpha-D-ribose 1-diphosphate + adenine. Its pathway is purine metabolism; AMP biosynthesis via salvage pathway; AMP from adenine: step 1/1. Its function is as follows. Catalyzes a salvage reaction resulting in the formation of AMP, that is energically less costly than de novo synthesis. The protein is Adenine phosphoribosyltransferase of Brevibacillus brevis (strain 47 / JCM 6285 / NBRC 100599).